A 188-amino-acid chain; its full sequence is ATP synthase subunit delta (188 aa).

This sequence belongs to the ATPase delta chain family. In terms of assembly, F-type ATPases have 2 components, F(1) - the catalytic core - and F(0) - the membrane proton channel. F(1) has five subunits: alpha(3), beta(3), gamma(1), delta(1), epsilon(1). F(0) has three main subunits: a(1), b(2) and c(10-14). The alpha and beta chains form an alternating ring which encloses part of the gamma chain. F(1) is attached to F(0) by a central stalk formed by the gamma and epsilon chains, while a peripheral stalk is formed by the delta and b chains.

The protein localises to the cell inner membrane. In terms of biological role, f(1)F(0) ATP synthase produces ATP from ADP in the presence of a proton or sodium gradient. F-type ATPases consist of two structural domains, F(1) containing the extramembraneous catalytic core and F(0) containing the membrane proton channel, linked together by a central stalk and a peripheral stalk. During catalysis, ATP synthesis in the catalytic domain of F(1) is coupled via a rotary mechanism of the central stalk subunits to proton translocation. This protein is part of the stalk that links CF(0) to CF(1). It either transmits conformational changes from CF(0) to CF(1) or is implicated in proton conduction. This chain is ATP synthase subunit delta, found in Paracoccus denitrificans (strain Pd 1222).